Reading from the N-terminus, the 336-residue chain is D-alanine--D-alanine ligase (336 aa).

Positions 124-330 constitute an ATP-grasp domain; sequence KMWFSALGIP…FTQYLSLVIN (207 aa). ATP is bound at residue 154-209; that stretch reads ALEKWGSIFVKAASQGSSVGCYKVDEASKVLGVLKDAFGYAPYVIVEKTIKARELE. Mg(2+) is bound by residues Asp-284, Glu-297, and Asn-299.

It belongs to the D-alanine--D-alanine ligase family. Requires Mg(2+) as cofactor. Mn(2+) is required as a cofactor.

The protein localises to the cytoplasm. It catalyses the reaction 2 D-alanine + ATP = D-alanyl-D-alanine + ADP + phosphate + H(+). It functions in the pathway cell wall biogenesis; peptidoglycan biosynthesis. Cell wall formation. This chain is D-alanine--D-alanine ligase, found in Shewanella oneidensis (strain ATCC 700550 / JCM 31522 / CIP 106686 / LMG 19005 / NCIMB 14063 / MR-1).